A 506-amino-acid polypeptide reads, in one-letter code: Protein nucleotidyltransferase YdiU (506 aa).

ATP contacts are provided by G95, G97, R98, K118, D130, G131, R181, and R188. The Proton acceptor role is filled by D257. 2 residues coordinate Mg(2+): N258 and D267. Residue D267 coordinates ATP. The disordered stretch occupies residues 487 to 506 (KHYQDAPTPDQRVKQTFCGT).

It belongs to the SELO family. Mg(2+) is required as a cofactor. The cofactor is Mn(2+).

The catalysed reaction is L-seryl-[protein] + ATP = 3-O-(5'-adenylyl)-L-seryl-[protein] + diphosphate. It carries out the reaction L-threonyl-[protein] + ATP = 3-O-(5'-adenylyl)-L-threonyl-[protein] + diphosphate. It catalyses the reaction L-tyrosyl-[protein] + ATP = O-(5'-adenylyl)-L-tyrosyl-[protein] + diphosphate. The enzyme catalyses L-histidyl-[protein] + UTP = N(tele)-(5'-uridylyl)-L-histidyl-[protein] + diphosphate. The catalysed reaction is L-seryl-[protein] + UTP = O-(5'-uridylyl)-L-seryl-[protein] + diphosphate. It carries out the reaction L-tyrosyl-[protein] + UTP = O-(5'-uridylyl)-L-tyrosyl-[protein] + diphosphate. Nucleotidyltransferase involved in the post-translational modification of proteins. It can catalyze the addition of adenosine monophosphate (AMP) or uridine monophosphate (UMP) to a protein, resulting in modifications known as AMPylation and UMPylation. This chain is Protein nucleotidyltransferase YdiU, found in Shewanella denitrificans (strain OS217 / ATCC BAA-1090 / DSM 15013).